The primary structure comprises 885 residues: Glycerol-3-phosphate acyltransferase (885 aa).

A compositionally biased stretch (pro residues) spans 1-17 (MPEQNPLPFPDGQPSPP). A disordered region spans residues 1 to 26 (MPEQNPLPFPDGQPSPPSTAAADTGA). The HXXXXD motif motif lies at 362 to 367 (HRSHMD).

This sequence belongs to the GPAT/DAPAT family.

The protein localises to the cell inner membrane. The enzyme catalyses sn-glycerol 3-phosphate + an acyl-CoA = a 1-acyl-sn-glycero-3-phosphate + CoA. It functions in the pathway phospholipid metabolism; CDP-diacylglycerol biosynthesis; CDP-diacylglycerol from sn-glycerol 3-phosphate: step 1/3. This Xanthomonas axonopodis pv. citri (strain 306) protein is Glycerol-3-phosphate acyltransferase.